Here is a 229-residue protein sequence, read N- to C-terminus: V-type proton ATPase subunit E (229 aa).

Belongs to the V-ATPase E subunit family. In terms of assembly, V-ATPase is a heteromultimeric enzyme composed of a peripheral catalytic V1 complex (components A to H) attached to an integral membrane V0 proton pore complex (components: a, c, c', c'' and d).

Functionally, subunit of the peripheral V1 complex of vacuolar ATPase essential for assembly or catalytic function. V-ATPase is responsible for acidifying a variety of intracellular compartments in eukaryotic cells. This is V-type proton ATPase subunit E (VATE) from Spinacia oleracea (Spinach).